Consider the following 141-residue polypeptide: Putative pre-16S rRNA nuclease (141 aa).

Belongs to the YqgF nuclease family.

Its subcellular location is the cytoplasm. Functionally, could be a nuclease involved in processing of the 5'-end of pre-16S rRNA. The chain is Putative pre-16S rRNA nuclease from Histophilus somni (strain 129Pt) (Haemophilus somnus).